The chain runs to 57 residues: Major exported protein (57 aa).

Belongs to the hcp1 family. In terms of assembly, homodimer.

It is found in the secreted. The protein is Major exported protein of Pseudomonas syringae pv. ribicola.